A 238-amino-acid polypeptide reads, in one-letter code: 1-(5-phosphoribosyl)-5-[(5-phosphoribosylamino)methylideneamino] imidazole-4-carboxamide isomerase (238 aa).

Residue aspartate 8 is the Proton acceptor of the active site. Catalysis depends on aspartate 130, which acts as the Proton donor.

This sequence belongs to the HisA/HisF family.

It localises to the cytoplasm. It carries out the reaction 1-(5-phospho-beta-D-ribosyl)-5-[(5-phospho-beta-D-ribosylamino)methylideneamino]imidazole-4-carboxamide = 5-[(5-phospho-1-deoxy-D-ribulos-1-ylimino)methylamino]-1-(5-phospho-beta-D-ribosyl)imidazole-4-carboxamide. The protein operates within amino-acid biosynthesis; L-histidine biosynthesis; L-histidine from 5-phospho-alpha-D-ribose 1-diphosphate: step 4/9. The polypeptide is 1-(5-phosphoribosyl)-5-[(5-phosphoribosylamino)methylideneamino] imidazole-4-carboxamide isomerase (Methanococcus maripaludis (strain C5 / ATCC BAA-1333)).